A 196-amino-acid polypeptide reads, in one-letter code: dCTP deaminase, dUMP-forming (196 aa).

DCTP-binding positions include 101–106 (KSSLGR), aspartate 119, 127–129 (TLE), glutamine 148, tyrosine 162, and glutamine 174. Glutamate 129 (proton donor/acceptor) is an active-site residue.

This sequence belongs to the dCTP deaminase family. Homotrimer.

It carries out the reaction dCTP + 2 H2O = dUMP + NH4(+) + diphosphate. It functions in the pathway pyrimidine metabolism; dUMP biosynthesis; dUMP from dCTP: step 1/1. In terms of biological role, bifunctional enzyme that catalyzes both the deamination of dCTP to dUTP and the hydrolysis of dUTP to dUMP without releasing the toxic dUTP intermediate. The sequence is that of dCTP deaminase, dUMP-forming from Tropheryma whipplei (strain TW08/27) (Whipple's bacillus).